A 352-amino-acid polypeptide reads, in one-letter code: UDP-N-acetylglucosamine--N-acetylmuramyl-(pentapeptide) pyrophosphoryl-undecaprenol N-acetylglucosamine transferase (352 aa).

Positions 195 and 287 each coordinate UDP-N-acetyl-alpha-D-glucosamine.

Belongs to the glycosyltransferase 28 family. MurG subfamily.

Its subcellular location is the cell membrane. It catalyses the reaction Mur2Ac(oyl-L-Ala-gamma-D-Glu-L-Lys-D-Ala-D-Ala)-di-trans,octa-cis-undecaprenyl diphosphate + UDP-N-acetyl-alpha-D-glucosamine = beta-D-GlcNAc-(1-&gt;4)-Mur2Ac(oyl-L-Ala-gamma-D-Glu-L-Lys-D-Ala-D-Ala)-di-trans,octa-cis-undecaprenyl diphosphate + UDP + H(+). It participates in cell wall biogenesis; peptidoglycan biosynthesis. Its function is as follows. Cell wall formation. Catalyzes the transfer of a GlcNAc subunit on undecaprenyl-pyrophosphoryl-MurNAc-pentapeptide (lipid intermediate I) to form undecaprenyl-pyrophosphoryl-MurNAc-(pentapeptide)GlcNAc (lipid intermediate II). This chain is UDP-N-acetylglucosamine--N-acetylmuramyl-(pentapeptide) pyrophosphoryl-undecaprenol N-acetylglucosamine transferase, found in Streptococcus pneumoniae serotype 19F (strain G54).